The chain runs to 191 residues: Putative acetyltransferase DDB_G0280825 (191 aa).

Belongs to the transferase hexapeptide repeat family.

This is Putative acetyltransferase DDB_G0280825 from Dictyostelium discoideum (Social amoeba).